A 123-amino-acid polypeptide reads, in one-letter code: MAKKGNISSRNLRISDQIQKDLAEMIQRELRDPRLGLVTLQSVTLTPDYAHAKVYFTVLGADAAETEAILNEKAGYLHSLLFKRLHIHTVPTLHFHHDTSVEHAIEMSRLINEANATRSKDED.

Belongs to the RbfA family. As to quaternary structure, monomer. Binds 30S ribosomal subunits, but not 50S ribosomal subunits or 70S ribosomes.

It localises to the cytoplasm. In terms of biological role, one of several proteins that assist in the late maturation steps of the functional core of the 30S ribosomal subunit. Associates with free 30S ribosomal subunits (but not with 30S subunits that are part of 70S ribosomes or polysomes). Required for efficient processing of 16S rRNA. May interact with the 5'-terminal helix region of 16S rRNA. The sequence is that of Ribosome-binding factor A from Cupriavidus taiwanensis (strain DSM 17343 / BCRC 17206 / CCUG 44338 / CIP 107171 / LMG 19424 / R1) (Ralstonia taiwanensis (strain LMG 19424)).